Here is a 235-residue protein sequence, read N- to C-terminus: Glycerol-3-phosphate acyltransferase (235 aa).

6 helical membrane-spanning segments follow: residues 4-24 (LLAI…IMAG), 56-76 (TVTL…VAFF), 94-114 (LLAG…GFKG), 124-144 (MLIG…LLTI), 152-172 (VASM…KYIF), and 191-211 (FHDS…LGIL).

The protein belongs to the PlsY family. Probably interacts with PlsX.

Its subcellular location is the cell inner membrane. The catalysed reaction is an acyl phosphate + sn-glycerol 3-phosphate = a 1-acyl-sn-glycero-3-phosphate + phosphate. Its pathway is lipid metabolism; phospholipid metabolism. In terms of biological role, catalyzes the transfer of an acyl group from acyl-phosphate (acyl-PO(4)) to glycerol-3-phosphate (G3P) to form lysophosphatidic acid (LPA). This enzyme utilizes acyl-phosphate as fatty acyl donor, but not acyl-CoA or acyl-ACP. The polypeptide is Glycerol-3-phosphate acyltransferase (Chlorobium limicola (strain DSM 245 / NBRC 103803 / 6330)).